We begin with the raw amino-acid sequence, 594 residues long: Proteasome-associated ATPase (594 aa).

Residues 20-98 (DDLAAQVTYL…KEEIDRLAQP (79 aa)) adopt a coiled-coil conformation. 282-287 (GCGKTL) is a binding site for ATP. The segment at 593–594 (YL) is docks into pockets in the proteasome alpha-ring.

The protein belongs to the AAA ATPase family. In terms of assembly, homohexamer. Assembles into a hexameric ring structure that caps the 20S proteasome core. Strongly interacts with the prokaryotic ubiquitin-like protein Pup through a hydrophobic interface; the interacting region of ARC lies in its N-terminal coiled-coil domain. There is one Pup binding site per ARC hexamer ring. Upon ATP-binding, the C-terminus of ARC interacts with the alpha-rings of the proteasome core, possibly by binding to the intersubunit pockets.

It functions in the pathway protein degradation; proteasomal Pup-dependent pathway. Its function is as follows. ATPase which is responsible for recognizing, binding, unfolding and translocation of pupylated proteins into the bacterial 20S proteasome core particle. May be essential for opening the gate of the 20S proteasome via an interaction with its C-terminus, thereby allowing substrate entry and access to the site of proteolysis. Thus, the C-termini of the proteasomal ATPase may function like a 'key in a lock' to induce gate opening and therefore regulate proteolysis. The protein is Proteasome-associated ATPase of Catenulispora acidiphila (strain DSM 44928 / JCM 14897 / NBRC 102108 / NRRL B-24433 / ID139908).